We begin with the raw amino-acid sequence, 85 residues long: uncharacterized protein (85 aa).

Belongs to the ycf76 family.

It is found in the plastid. It localises to the chloroplast. This is an uncharacterized protein from Zea mays (Maize).